The primary structure comprises 299 residues: Urease accessory protein UreD (299 aa).

It belongs to the UreD family. In terms of assembly, ureD, UreF and UreG form a complex that acts as a GTP-hydrolysis-dependent molecular chaperone, activating the urease apoprotein by helping to assemble the nickel containing metallocenter of UreC. The UreE protein probably delivers the nickel.

The protein localises to the cytoplasm. Functionally, required for maturation of urease via the functional incorporation of the urease nickel metallocenter. This is Urease accessory protein UreD from Prochlorococcus marinus (strain MIT 9303).